Here is a 348-residue protein sequence, read N- to C-terminus: 3-isopropylmalate dehydrogenase (348 aa).

76-87 provides a ligand contact to NAD(+); sequence GPKWTDPNNRPE. Residues R94, R104, R132, and D217 each contribute to the substrate site. Residues D217, D241, and D245 each contribute to the Mg(2+) site. 275 to 287 provides a ligand contact to NAD(+); the sequence is GSAPDIAGKNVAN.

The protein belongs to the isocitrate and isopropylmalate dehydrogenases family. LeuB type 1 subfamily. In terms of assembly, homodimer. Mg(2+) serves as cofactor. The cofactor is Mn(2+).

The protein resides in the cytoplasm. The enzyme catalyses (2R,3S)-3-isopropylmalate + NAD(+) = 4-methyl-2-oxopentanoate + CO2 + NADH. Its pathway is amino-acid biosynthesis; L-leucine biosynthesis; L-leucine from 3-methyl-2-oxobutanoate: step 3/4. Functionally, catalyzes the oxidation of 3-carboxy-2-hydroxy-4-methylpentanoate (3-isopropylmalate) to 3-carboxy-4-methyl-2-oxopentanoate. The product decarboxylates to 4-methyl-2 oxopentanoate. In Staphylococcus aureus (strain MRSA252), this protein is 3-isopropylmalate dehydrogenase.